The primary structure comprises 1241 residues: RNA polymerase II C-terminal domain phosphatase-like 3 (1241 aa).

Disordered regions lie at residues 361 to 402, 428 to 470, 505 to 525, 578 to 598, 677 to 702, 720 to 800, and 852 to 885; these read DHDA…TTEG, VFKT…HLIY, ISAP…RDPR, KRQK…WLED, AIQK…VSTP, VLQD…QNGT, and TERD…GPTR. The segment covering 368–378 has biased composition (polar residues); that stretch reads PSPTRETTPSL. The segment covering 441–466 has biased composition (low complexity); that stretch reads GEPNDGNGDVGGEVSSSVVKSSNPGS. Residues 677 to 686 are compositionally biased toward basic and acidic residues; the sequence is AIQKPMDPRR. Composition is skewed to polar residues over residues 691–702 and 791–800; these read PGSSVQPGVSTP and PRQNISQNGT. A compositionally biased stretch (low complexity) spans 871–881; the sequence is SVSAASVTAAA. An FCP1 homology domain is found at 923–1103; sequence FASQKLSLVL…GLLGPSLLEL (181 aa). A BRCT domain is found at 1146-1239; the sequence is EQRKILAGCR…QRANENLYAI (94 aa).

Interacts with RAP74. It depends on Mg(2+) as a cofactor. Co(2+) serves as cofactor. The cofactor is Mn(2+).

The protein localises to the nucleus. The catalysed reaction is O-phospho-L-seryl-[protein] + H2O = L-seryl-[protein] + phosphate. It carries out the reaction O-phospho-L-threonyl-[protein] + H2O = L-threonyl-[protein] + phosphate. Completely dephosphorylates 'Ser-2', and partially 'Ser-5' and 'Ser-7' of the heptad repeats YSPTSPS in the C-terminal domain (CTD) of the largest RNA polymerase II subunit (RPB1). Involved in defense response. Acts as a negative regulator of immune gene expression and immunity to pathogen infections. Preferentially dephosphorylates 'Ser-2' of RNA polymerase II CTD. This counterregulates the MAP kinase (MAPK) or cyclin-dependent kinase C (CDKC)-mediated phosphorylation of CTD in response to pathogens and upon perception of microbe-associated molecular patterns (MAMPs). MAPKs phosphorylate and activate CDKCs, which are CTD kinases that positively regulate plant innate immunity. Acts as a negative regulator of stress gene transcription involved in abscisic acid (ABA) mediated signaling pathway and cold resistance. Acts as a post-transcriptional gene silencing (PTGS) suppressor. The sequence is that of RNA polymerase II C-terminal domain phosphatase-like 3 from Arabidopsis thaliana (Mouse-ear cress).